The following is a 310-amino-acid chain: L-lactate dehydrogenase (310 aa).

NAD(+)-binding positions include 10–11, D32, Y62, and 76–77; these read MV and GV. Substrate-binding positions include Q79, R85, and 117–120; that span reads NPVD. NAD(+) is bound by residues 115–117 and S140; that span reads ATN. 145–148 contacts substrate; the sequence is DTAR. Residues R150 and H165 each contribute to the beta-D-fructose 1,6-bisphosphate site. The active-site Proton acceptor is the H172. The residue at position 218 (Y218) is a Phosphotyrosine. Position 227 (T227) interacts with substrate.

The protein belongs to the LDH/MDH superfamily. LDH family. In terms of assembly, homotetramer.

It is found in the cytoplasm. The enzyme catalyses (S)-lactate + NAD(+) = pyruvate + NADH + H(+). It participates in fermentation; pyruvate fermentation to lactate; (S)-lactate from pyruvate: step 1/1. Its activity is regulated as follows. Allosterically activated by fructose 1,6-bisphosphate (FBP). Its function is as follows. Catalyzes the conversion of lactate to pyruvate. This chain is L-lactate dehydrogenase, found in Thermus thermophilus (strain ATCC 27634 / DSM 579 / HB8).